The following is a 147-amino-acid chain: Ribonuclease H (147 aa).

Residues 1 to 142 (MAGKVVMYTD…ADELANRGVR (142 aa)) form the RNase H type-1 domain. Mg(2+)-binding residues include D10, E48, D70, and D134.

The protein belongs to the RNase H family. As to quaternary structure, monomer. It depends on Mg(2+) as a cofactor.

The protein localises to the cytoplasm. It catalyses the reaction Endonucleolytic cleavage to 5'-phosphomonoester.. Endonuclease that specifically degrades the RNA of RNA-DNA hybrids. This chain is Ribonuclease H, found in Marinobacter nauticus (strain ATCC 700491 / DSM 11845 / VT8) (Marinobacter aquaeolei).